The chain runs to 225 residues: MPEIVKTLSFDETEIKFTGDGKQGIFEGYASVFNNTDSDGDIILPGAFKNALANQTRKVAMFFNHKTWELPVGKWDSLAEDEKGLYVRGQLTPGHSGAADLKAAMQHGTVEGMSVGFSVAKDDYTIIPTGRIFKNIQALREISVCTFPANEQAGIAAMKSVDGIETIRDVENWLRDSVGLTKSQAVGLIARFKSAIRSESEGDGNEAQINALLQSIKSFPSNLGK.

Residues H65, S114, and E141 contribute to the active site.

Belongs to the HK97 prohead protease protein family. In terms of processing, cleaves itself autocatalytically to yield the mature form of the protease.

It localises to the virion. Protease involved in virion assembly and maturation. The sequence is that of Prohead protease (4) from Escherichia coli (Bacteriophage HK97).